Consider the following 124-residue polypeptide: Small ribosomal subunit protein bS6 (124 aa).

A disordered region spans residues 97–124 (EQGPSAMMRRGDRDRSNRSDRRRDRDAA). Over residues 105–124 (RRGDRDRSNRSDRRRDRDAA) the composition is skewed to basic and acidic residues.

It belongs to the bacterial ribosomal protein bS6 family.

Its function is as follows. Binds together with bS18 to 16S ribosomal RNA. The protein is Small ribosomal subunit protein bS6 of Zymomonas mobilis subsp. mobilis (strain ATCC 31821 / ZM4 / CP4).